We begin with the raw amino-acid sequence, 343 residues long: Anthranilate phosphoribosyltransferase (343 aa).

Residues glycine 85, 88 to 89 (GD), threonine 93, 95 to 98 (NIST), 113 to 121 (KHGGRSVSS), and alanine 125 each bind 5-phospho-alpha-D-ribose 1-diphosphate. Glycine 85 lines the anthranilate pocket. Serine 97 is a Mg(2+) binding site. Residue arginine 171 participates in anthranilate binding. Mg(2+) contacts are provided by aspartate 230 and glutamate 231.

Belongs to the anthranilate phosphoribosyltransferase family. As to quaternary structure, homodimer. It depends on Mg(2+) as a cofactor.

The catalysed reaction is N-(5-phospho-beta-D-ribosyl)anthranilate + diphosphate = 5-phospho-alpha-D-ribose 1-diphosphate + anthranilate. It participates in amino-acid biosynthesis; L-tryptophan biosynthesis; L-tryptophan from chorismate: step 2/5. Its function is as follows. Catalyzes the transfer of the phosphoribosyl group of 5-phosphorylribose-1-pyrophosphate (PRPP) to anthranilate to yield N-(5'-phosphoribosyl)-anthranilate (PRA). The sequence is that of Anthranilate phosphoribosyltransferase from Aromatoleum aromaticum (strain DSM 19018 / LMG 30748 / EbN1) (Azoarcus sp. (strain EbN1)).